The sequence spans 67 residues: Large ribosomal subunit protein bL32 (67 aa).

Residues 1–19 (MAVPKRKQSRANTHARRSQ) are compositionally biased toward basic residues. Residues 1–20 (MAVPKRKQSRANTHARRSQW) form a disordered region.

The protein belongs to the bacterial ribosomal protein bL32 family.

In Leifsonia xyli subsp. xyli (strain CTCB07), this protein is Large ribosomal subunit protein bL32.